The sequence spans 391 residues: Phosphoglycerate kinase (391 aa).

Substrate is bound by residues 21–23, R36, 59–62, R113, and R146; these read DLN and HLGR. Residues K197, E319, and 345–348 contribute to the ATP site; that span reads GGDT.

The protein belongs to the phosphoglycerate kinase family. Monomer.

It localises to the cytoplasm. The enzyme catalyses (2R)-3-phosphoglycerate + ATP = (2R)-3-phospho-glyceroyl phosphate + ADP. The protein operates within carbohydrate degradation; glycolysis; pyruvate from D-glyceraldehyde 3-phosphate: step 2/5. In Shewanella putrefaciens (strain CN-32 / ATCC BAA-453), this protein is Phosphoglycerate kinase.